The sequence spans 119 residues: MEFDPASLRYDDQGLIPAIAQDAASGEVLMMAWMNAEAVARTLETGRVTYWSRSRQAFWIKGESSGHVQTLVEMRVDCDRDCLLLQVRQEGPACHTNRRTCFYTAIRDGAEVELMAPMV.

Asp-77 is a Mg(2+) binding site. Cys-78 is a binding site for Zn(2+). Residues Asp-79 and Asp-81 each contribute to the Mg(2+) site. 2 residues coordinate Zn(2+): Cys-94 and Cys-101.

Belongs to the PRA-CH family. As to quaternary structure, homodimer. Requires Mg(2+) as cofactor. Zn(2+) serves as cofactor.

It localises to the cytoplasm. It catalyses the reaction 1-(5-phospho-beta-D-ribosyl)-5'-AMP + H2O = 1-(5-phospho-beta-D-ribosyl)-5-[(5-phospho-beta-D-ribosylamino)methylideneamino]imidazole-4-carboxamide. The protein operates within amino-acid biosynthesis; L-histidine biosynthesis; L-histidine from 5-phospho-alpha-D-ribose 1-diphosphate: step 3/9. Functionally, catalyzes the hydrolysis of the adenine ring of phosphoribosyl-AMP. This chain is Phosphoribosyl-AMP cyclohydrolase, found in Dinoroseobacter shibae (strain DSM 16493 / NCIMB 14021 / DFL 12).